The primary structure comprises 229 residues: Nectarin-1 (229 aa).

The N-terminal stretch at 1–32 (MAAFGIKSKIFQIMEMTILFLFAISIDRYCFA) is a signal peptide. The cysteines at positions 42 and 57 are disulfide-linked. Residue N60 is glycosylated (N-linked (GlcNAc...) asparagine). A Cupin type-1 domain is found at 69–217 (FAISKPGATN…TFQINIEDVQ (149 aa)). Mn(2+) contacts are provided by H117, H119, E124, and H163.

The protein belongs to the germin family. In terms of assembly, monomer. In the absence of manganese, it forms tetrameric and pentameric forms which show superoxide dismutase activity. Mn(2+) serves as cofactor. Glycosylated.

Its subcellular location is the secreted. It localises to the extracellular space. It is found in the apoplast. The enzyme catalyses 2 superoxide + 2 H(+) = H2O2 + O2. May interact with bacterial adhesins thereby protecting the reproductive tissues from microbial attack. Has no oxalate oxidase activity. The polypeptide is Nectarin-1 (NEC1) (Nicotiana plumbaginifolia (Leadwort-leaved tobacco)).